We begin with the raw amino-acid sequence, 62 residues long: Photosystem II reaction center protein Z (62 aa).

The next 2 membrane-spanning stretches (helical) occupy residues 8-28 (LVVA…ITLS) and 41-61 (VTAS…NSFV).

It belongs to the PsbZ family. PSII is composed of 1 copy each of membrane proteins PsbA, PsbB, PsbC, PsbD, PsbE, PsbF, PsbH, PsbI, PsbJ, PsbK, PsbL, PsbM, PsbT, PsbX, PsbY, PsbZ, Psb30/Ycf12, at least 3 peripheral proteins of the oxygen-evolving complex and a large number of cofactors. It forms dimeric complexes.

The protein resides in the plastid. The protein localises to the chloroplast thylakoid membrane. Its function is as follows. May control the interaction of photosystem II (PSII) cores with the light-harvesting antenna, regulates electron flow through the 2 photosystem reaction centers. PSII is a light-driven water plastoquinone oxidoreductase, using light energy to abstract electrons from H(2)O, generating a proton gradient subsequently used for ATP formation. This is Photosystem II reaction center protein Z from Cyanidioschyzon merolae (strain NIES-3377 / 10D) (Unicellular red alga).